A 512-amino-acid chain; its full sequence is uncharacterized protein (512 aa).

Helical transmembrane passes span 25-45 (GFYTAGLQLGSGAVVLPVICA), 55-75 (LLYPAFCIGAILGNSLSPLIL), 96-116 (LVVCNAAVPWTGVGVAAVFLA), 123-143 (VVTGVSSVAYTDMISSMLPAV), 148-168 (LLLTQGAAGSVLATGVTLVIV), 183-203 (LLWLGAAGLVCSGIAALFVGP), 238-258 (MTTYLLFVPISLGTTFFSLRA), 263-283 (GSLHVLVILSSIGLVVGSMLW), 294-314 (GLLLGSALLNAAAALLCMVAE), 329-349 (FLLATVAAQTVVAASISWISV), 359-379 (LICVGSTLAAVEATVLGVALG), and 386-406 (ATIWPVVVVLTLAVIAAVASL). Residues 428 to 512 (YRPATPNPIH…APLDAGQRIA (85 aa)) are disordered.

The protein resides in the cell membrane. This is an uncharacterized protein from Mycobacterium tuberculosis (strain CDC 1551 / Oshkosh).